A 407-amino-acid chain; its full sequence is Proteasome-activating nucleotidase (407 aa).

The stretch at 22–67 (KEKTQIAELESKVLRLELKNKDISRENVQIKKENEILKRELDKLRI) forms a coiled coil. ATP is bound by residues 192–197 (GTGKTL) and His-331. The docks into pockets in the proteasome alpha-ring to cause gate opening stretch occupies residues 405–407 (MYG).

This sequence belongs to the AAA ATPase family. In terms of assembly, homohexamer. The hexameric complex has a two-ring architecture resembling a top hat that caps the 20S proteasome core at one or both ends. Upon ATP-binding, the C-terminus of PAN interacts with the alpha-rings of the proteasome core by binding to the intersubunit pockets.

Its subcellular location is the cytoplasm. ATPase which is responsible for recognizing, binding, unfolding and translocation of substrate proteins into the archaeal 20S proteasome core particle. Is essential for opening the gate of the 20S proteasome via an interaction with its C-terminus, thereby allowing substrate entry and access to the site of proteolysis. Thus, the C-termini of the proteasomal ATPase function like a 'key in a lock' to induce gate opening and therefore regulate proteolysis. Unfolding activity requires energy from ATP hydrolysis, whereas ATP binding alone promotes ATPase-20S proteasome association which triggers gate opening, and supports translocation of unfolded substrates. This Methanococcus maripaludis (strain C6 / ATCC BAA-1332) protein is Proteasome-activating nucleotidase.